Reading from the N-terminus, the 304-residue chain is Peptidyl-prolyl cis-trans isomerase FKBP35 (304 aa).

Residues 37 to 126 (GNEVTVHYVG…LFEIELLSFR (90 aa)) form the PPIase FKBP-type domain. TPR repeat units follow at residues 144–177 (AFDIKEEGNEFFKKNEINEAIVKYKEALDFFIHT), 194–227 (ISCNLNLATCYNKNKDYPKAIDHASKVLKIDKNN), and 228–261 (VKALYKLGVANMYFGFLEEAKENLYKAASLNPNN).

This sequence belongs to the FKBP-type PPIase family. In terms of assembly, homodimer. Interacts (via TPR repeats) with HSP90 (probably via MEEVD motif).

It localises to the cytoplasm. The protein resides in the nucleus. It carries out the reaction [protein]-peptidylproline (omega=180) = [protein]-peptidylproline (omega=0). With respect to regulation, inhibited by FK506 and its derivates, such as ascomycin, and rapamycin. FK506 and rapamycin inhibit peptidylprolyl isomerase activity but not chaperone activity. Inhibited by N-(2-ethyl-phenyl)-2-(3H-imidazao [4, 5-b] pyridin-2-yl-sulfanyl)-acetamide (D44). Not inhibited by cyclosporin A. Inhibition of calcineurin phosphatase activity is enhanced by FK506. Its function is as follows. Has peptidylprolyl isomerase (PPIase) and co-chaperone activities. Assists protein folding by catalyzing the peptidyl conversion of cis and trans rotamers of the prolyl amide bond of protein substrates. Inhibits calcineurin phosphatase activity in vitro. Plays an essential role in merozoite egress from host erythrocytes. This chain is Peptidyl-prolyl cis-trans isomerase FKBP35, found in Plasmodium falciparum (isolate 3D7).